A 363-amino-acid chain; its full sequence is Pyrimidine monooxygenase RutA (363 aa).

FMN contacts are provided by residues 49-50, Asn-115, Glu-124, 140-141, and Ser-190; these read IK and RY.

It belongs to the NtaA/SnaA/DszA monooxygenase family. RutA subfamily.

It carries out the reaction uracil + FMNH2 + NADH + O2 = (Z)-3-ureidoacrylate + FMN + NAD(+) + H2O + H(+). It catalyses the reaction thymine + FMNH2 + NADH + O2 = (Z)-2-methylureidoacrylate + FMN + NAD(+) + H2O + H(+). Functionally, catalyzes the pyrimidine ring opening between N-3 and C-4 by an unusual flavin hydroperoxide-catalyzed mechanism, adding oxygen atoms in the process to yield ureidoacrylate peracid, that immediately reacts with FMN forming ureidoacrylate and FMN-N(5)-oxide. The FMN-N(5)-oxide reacts spontaneously with NADH to produce FMN. Requires the flavin reductase RutF to regenerate FMN in vivo. This Klebsiella pneumoniae (strain 342) protein is Pyrimidine monooxygenase RutA.